Consider the following 317-residue polypeptide: E3 ubiquitin-protein ligase NRDP1 (317 aa).

The RING-type; degenerate zinc-finger motif lies at 18–57 (CPICSGVLEEPVQAPHCEHAFCNACITQWFSQQQTCPVDR). The SIAH-type; degenerate zinc-finger motif lies at 78–138 (KLQIACDNAV…LPNHNCIKHL (61 aa)).

Interacts with USP8, ERBB3, PRKN and BIRC6. Interacts with CSF2RB, EPOR, IL3RA, MYD88 and TBK1. Interacts with Clec16a. In terms of processing, autoubiquitinated. Autoubiquitination leads to proteasomal degradation. Deubiquitinated by USP8 to get stabilized which induces apoptosis.

It carries out the reaction S-ubiquitinyl-[E2 ubiquitin-conjugating enzyme]-L-cysteine + [acceptor protein]-L-lysine = [E2 ubiquitin-conjugating enzyme]-L-cysteine + N(6)-ubiquitinyl-[acceptor protein]-L-lysine.. It functions in the pathway protein modification; protein ubiquitination. Its function is as follows. Acts as E3 ubiquitin-protein ligase and regulates the degradation of target proteins. Polyubiquitinates MYD88. Negatively regulates MYD88-dependent production of pro-inflammatory cytokines. Can promote TRIF-dependent production of type I interferon and inhibits infection with vesicular stomatitis virus. Also promotes activation of TBK1 and IRF3. Involved in the ubiquitination of erythropoietin (EPO) and interleukin-3 (IL-3) receptors. Thus, through maintaining basal levels of cytokine receptors, RNF41 is involved in the control of hematopoietic progenitor cell differentiation into myeloerythroid lineages. Contributes to the maintenance of steady-state ERBB3 levels by mediating its growth factor-independent degradation. Involved in the degradation of the inhibitor of apoptosis BIRC6 and thus is an important regulator of cell death by promoting apoptosis. Also acts as a PRKN modifier that accelerates its degradation, resulting in a reduction of PRKN activity, influencing the balance of intracellular redox state. The RNF41-PRKN pathway regulates autophagosome-lysosome fusion during late mitophagy. Mitophagy is a selective form of autophagy necessary for mitochondrial quality control. This chain is E3 ubiquitin-protein ligase NRDP1 (Rnf41), found in Mus musculus (Mouse).